The chain runs to 435 residues: Divergent protein kinase domain 2B (435 aa).

A signal peptide spans 1 to 33 (MESQWRGAAATAFHQHWLARLLLWVSTLSCSFS). 2 N-linked (GlcNAc...) asparagine glycosylation sites follow: asparagine 102 and asparagine 395.

Belongs to the DIPK family.

The protein localises to the secreted. In Mus musculus (Mouse), this protein is Divergent protein kinase domain 2B (Dipk2b).